Here is a 1005-residue protein sequence, read N- to C-terminus: Regulator of telomere elongation helicase 1 homolog (1005 aa).

The Helicase ATP-binding domain maps to 7-322 (AGIPVHFPFE…KEMLLELEKA (316 aa)). Residue 42 to 49 (SPTGTGKT) participates in ATP binding. [4Fe-4S] cluster is bound by residues Cys145, Cys163, Cys172, and Cys208. The short motif at 251–254 (DEAH) is the DEAH box element. Thr876 bears the Phosphothreonine mark. The segment at 893–917 (NGPLKTEPSEPATTSSSFCPTPAQS) is disordered.

It belongs to the helicase family. RAD3/XPD subfamily.

The protein localises to the nucleus. The enzyme catalyses ATP + H2O = ADP + phosphate + H(+). Functionally, a probable ATP-dependent DNA helicase implicated in DNA repair and the maintenance of genomic stability. Acts as an anti-recombinase to counteract toxic recombination and limit crossover during meiosis. Regulates meiotic recombination and crossover homeostasis by physically dissociating strand invasion events and thereby promotes noncrossover repair by meiotic synthesis dependent strand annealing (SDSA) as well as disassembly of D loop recombination intermediates. This is Regulator of telomere elongation helicase 1 homolog from Drosophila virilis (Fruit fly).